The following is a 428-amino-acid chain: UPF0229 protein YeaH (428 aa).

Over residues 78-90 the composition is skewed to basic and acidic residues; sequence GNDHFIQNDRIER. The segment at 78–111 is disordered; that stretch reads GNDHFIQNDRIERPQGGGGGGSGSGQGQASQDGE. Positions 92-103 are enriched in gly residues; it reads QGGGGGGSGSGQ.

The protein belongs to the UPF0229 family.

This is UPF0229 protein YeaH from Salmonella enteritidis PT4 (strain P125109).